A 383-amino-acid polypeptide reads, in one-letter code: Homoserine O-succinyltransferase (383 aa).

Positions 51–361 constitute an AB hydrolase-1 domain; it reads NALLICHALS…ESDFGHDAFL (311 aa). The active-site Nucleophile is the S157. Residue R227 participates in substrate binding. Residues D324 and H357 contribute to the active site. D358 contributes to the substrate binding site.

Belongs to the AB hydrolase superfamily. MetX family. As to quaternary structure, homodimer.

It is found in the cytoplasm. It catalyses the reaction L-homoserine + succinyl-CoA = O-succinyl-L-homoserine + CoA. It participates in amino-acid biosynthesis; L-methionine biosynthesis via de novo pathway; O-succinyl-L-homoserine from L-homoserine: step 1/1. Its function is as follows. Transfers a succinyl group from succinyl-CoA to L-homoserine, forming succinyl-L-homoserine. The polypeptide is Homoserine O-succinyltransferase (Teredinibacter turnerae (strain ATCC 39867 / T7901)).